A 1296-amino-acid chain; its full sequence is Phosphoribosylformylglycinamidine synthase (1296 aa).

The tract at residues 304–323 is disordered; it reads WPGAATGSGGEIRDEGATGR. ATP-binding positions include 306 to 317 and A677; that span reads GAATGSGGEIRD. 4 residues coordinate Mg(2+): D678, E717, N721, and D885. S887 provides a ligand contact to ATP. Basic and acidic residues predominate over residues 1000–1013; that stretch reads PDCADQEHQAKQDE. The interval 1000 to 1019 is disordered; that stretch reads PDCADQEHQAKQDESDPGLN. In terms of domain architecture, Glutamine amidotransferase type-1 spans 1043 to 1296; it reads VAVLREQGVN…MFRNARKQLG (254 aa). C1136 functions as the Nucleophile in the catalytic mechanism. Residues H1261 and E1263 contribute to the active site.

This sequence in the N-terminal section; belongs to the FGAMS family. In terms of assembly, monomer.

Its subcellular location is the cytoplasm. It carries out the reaction N(2)-formyl-N(1)-(5-phospho-beta-D-ribosyl)glycinamide + L-glutamine + ATP + H2O = 2-formamido-N(1)-(5-O-phospho-beta-D-ribosyl)acetamidine + L-glutamate + ADP + phosphate + H(+). Its pathway is purine metabolism; IMP biosynthesis via de novo pathway; 5-amino-1-(5-phospho-D-ribosyl)imidazole from N(2)-formyl-N(1)-(5-phospho-D-ribosyl)glycinamide: step 1/2. Functionally, phosphoribosylformylglycinamidine synthase involved in the purines biosynthetic pathway. Catalyzes the ATP-dependent conversion of formylglycinamide ribonucleotide (FGAR) and glutamine to yield formylglycinamidine ribonucleotide (FGAM) and glutamate. The polypeptide is Phosphoribosylformylglycinamidine synthase (Yersinia pseudotuberculosis serotype I (strain IP32953)).